We begin with the raw amino-acid sequence, 139 residues long: Large ribosomal subunit protein bL17 (139 aa).

The protein belongs to the bacterial ribosomal protein bL17 family. Part of the 50S ribosomal subunit. Contacts protein L32.

The protein is Large ribosomal subunit protein bL17 of Sphingopyxis alaskensis (strain DSM 13593 / LMG 18877 / RB2256) (Sphingomonas alaskensis).